Reading from the N-terminus, the 356-residue chain is MPVNLKQLAELLGLSQTTVSRALNGYPEVNAETRARVLEAVRETGYRPNRAAQRLATGKAYSIGLVMPIAAGIDSDIHFGEFLAGLAEEAVEHDFHFVLNPSAPEDEEATFRRLAASGNVDAVFIAYMRANDPRIEMLKALSIPFVVHGRSIGGPRDYPFVDVDNTGAFYDAARLLIQLGHNRIALINGPEHLTFSIRRRKGLVRALAEKGLNLDDALVHHSAMTDEHGYRSMQRFLKRPAPPTAVLCSSTVLALGAVRAINQAGLAIGTDISLIAHDDVLPMLKPENFSVPLTTTRSSLRAAGARIAKRLIGGILNQGDYPEQELWRAELIVRASTGPAPDRSPLPNPSPQVGGA.

The 57-residue stretch at 1–57 (MPVNLKQLAELLGLSQTTVSRALNGYPEVNAETRARVLEAVRETGYRPNRAAQRLAT) folds into the HTH lacI-type domain. The segment at residues 5–24 (LKQLAELLGLSQTTVSRALN) is a DNA-binding region (H-T-H motif). The disordered stretch occupies residues 337–356 (TGPAPDRSPLPNPSPQVGGA).

Functionally, probable regulatory protein for the binding-protein-dependent transport system for alpha-glucosides such as sucrose, maltose and trehalose. In Rhizobium meliloti (strain 1021) (Ensifer meliloti), this protein is HTH-type transcriptional regulator AglR (aglR).